The sequence spans 319 residues: Mitochondrial thiamine pyrophosphate carrier 1 (319 aa).

Solcar repeat units lie at residues 12-110 (GQRY…VTQS), 121-207 (PQPA…VRVP), and 214-309 (PFGS…VLKI). Helical transmembrane passes span 17–35 (VVAA…VAPL), 91–107 (LLYI…YRTV), 127–147 (FVSG…FDLL), 182–201 (GVSA…FATY), 221–237 (TAGV…VFPL), and 284–301 (GLTV…VTMW).

Belongs to the mitochondrial carrier (TC 2.A.29) family.

It localises to the mitochondrion inner membrane. Its function is as follows. Mitochondrial transporter that mediates uptake of thiamine pyrophosphate (ThPP) into mitochondria. The sequence is that of Mitochondrial thiamine pyrophosphate carrier 1 (TPC1) from Coccidioides immitis (strain RS) (Valley fever fungus).